The following is a 423-amino-acid chain: ATP-citrate synthase alpha chain protein 1 (423 aa).

Positions 343, 345, and 376 each coordinate citrate.

This sequence belongs to the succinate/malate CoA ligase beta subunit family. Heterooctamer of 4 alpha and 4 beta chains. In terms of tissue distribution, expressed in trichomes, epidermal leaf cells, anther tapetal cells, stigma and in young vascular bundles of expanding leaves, cotyledons, roots, pedicel of flowers and siliques.

The protein localises to the cytoplasm. The protein resides in the cytosol. It catalyses the reaction oxaloacetate + acetyl-CoA + ADP + phosphate = citrate + ATP + CoA. Its function is as follows. ATP citrate-lyase is the primary enzyme responsible for the synthesis of cytosolic acetyl-CoA, used for the elongation of fatty acids and biosynthesis of isoprenoids, flavonoids and malonated derivatives. May supply substrate to the cytosolic acetyl-CoA carboxylase, which generates the malonyl-CoA used for the synthesis of a multitude of compounds, including very long chain fatty acids and flavonoids. Required for normal growth and development and elongation of C18 fatty acids to C20 to C24 fatty acids in seeds. In contrast to all known animal ACL enzymes having a homomeric structure, plant ACLs are composed of alpha and beta chains. In Arabidopsis thaliana (Mouse-ear cress), this protein is ATP-citrate synthase alpha chain protein 1 (ACLA-1).